The following is a 501-amino-acid chain: Sucrose transport protein SUT2 (501 aa).

The Cytoplasmic segment spans residues 1 to 31; the sequence is MPRRPSGGGGGAGPAAAAVRKVPLRKLLRAA. Residues 32–52 traverse the membrane as a helical segment; it reads SVACGVQFGWALQLSLLTPYV. Topologically, residues 53–55 are extracellular; the sequence is QEL. The helical transmembrane segment at 56-76 threads the bilayer; that stretch reads GIPHAFASLVWLCGPLSGLLV. Over 77–98 the chain is Cytoplasmic; sequence QPLVGHLSDRIAPAASPLGRRR. The helical transmembrane segment at 99-119 threads the bilayer; sequence PFIAAGAASIAAAVLTVGFSA. At 120–135 the chain is on the extracellular side; the sequence is DLGRIFGDSITPGSTR. The chain crosses the membrane as a helical span at residues 136 to 156; that stretch reads LGAIIVYLVGFWLLDVGNNAT. At 157–176 the chain is on the cytoplasmic side; sequence QGPCRAFLADLTENDPRRTR. A helical transmembrane segment spans residues 177 to 197; sequence IANAYFSLFMALGNILGYATG. The Extracellular portion of the chain corresponds to 198 to 222; the sequence is AYSGWYKIFPFTVTPSCSISCANLK. Residues 223 to 243 form a helical membrane-spanning segment; the sequence is SAFLLDIIILVVTTCITVASV. The Cytoplasmic segment spans residues 244–278; that stretch reads QEPQSFGSDEADHPSTEQEAFLWELFGSFRYFTLP. A helical transmembrane segment spans residues 279 to 299; the sequence is VWMVLIVTALTWIGWFPFILF. At 300–327 the chain is on the extracellular side; it reads DTDWMGREIYRGSPDDPSITQSYHDGVR. The chain crosses the membrane as a helical span at residues 328-348; sequence MGSFGLMLNSVLLGFTSIVLE. Over 349-356 the chain is Cytoplasmic; the sequence is KLCRKWGA. Residues 357–377 form a helical membrane-spanning segment; the sequence is GLVWGVSNILMALCFVAMLVI. Residues 378–394 are Extracellular-facing; that stretch reads TYVAKNMDYPPSGVPPT. Residues 395-415 traverse the membrane as a helical segment; sequence GIVIASLVVFTILGAPLAITY. Residues 416-433 lie on the Cytoplasmic side of the membrane; sequence SIPYAMAASRVENLGLGQ. Residues 434-454 form a helical membrane-spanning segment; sequence GLAMGILNLAIVIPQVIVSLG. The Extracellular segment spans residues 455–467; the sequence is SGPWDQLFGGGNA. Residues 468 to 488 form a helical membrane-spanning segment; the sequence is PAFAVAAAASFIGGLVAILGL. Topologically, residues 489–501 are cytoplasmic; the sequence is PRARIASRRRGHR.

Belongs to the glycoside-pentoside-hexuronide (GPH) cation symporter transporter (TC 2.A.2.4) family. As to quaternary structure, homodimer. Widely expressed.

The protein localises to the cell membrane. It functions in the pathway glycan biosynthesis; sucrose metabolism. Functionally, responsible for the transport of sucrose into the cell, with the concomitant uptake of protons (symport system). May also transport other glucosides. The chain is Sucrose transport protein SUT2 (SUT2) from Oryza sativa subsp. japonica (Rice).